The primary structure comprises 233 residues: NADP-dependent glyceraldehyde-3-phosphate dehydrogenase (233 aa).

7 to 8 (NY) contacts substrate. Positions 30 and 33 each coordinate NADP(+). 83 to 87 (GGDTG) provides a ligand contact to NAD(+). Catalysis depends on glutamate 102, which acts as the Proton acceptor. 135-137 (RCT) serves as a coordination point for substrate. Cysteine 136 serves as the catalytic Nucleophile. NADP(+)-binding residues include glutamate 180 and glutamate 229.

It belongs to the aldehyde dehydrogenase family.

It localises to the cytoplasm. It carries out the reaction D-glyceraldehyde 3-phosphate + NADP(+) + H2O = (2R)-3-phosphoglycerate + NADPH + 2 H(+). Functionally, important as a means of generating NADPH for biosynthetic reactions. The protein is NADP-dependent glyceraldehyde-3-phosphate dehydrogenase (GapN) of Scenedesmus vacuolatus (Green alga).